The chain runs to 166 residues: 3-isopropylmalate dehydratase small subunit (166 aa).

It belongs to the LeuD family. LeuD type 2 subfamily. In terms of assembly, heterodimer of LeuC and LeuD.

It carries out the reaction (2R,3S)-3-isopropylmalate = (2S)-2-isopropylmalate. It functions in the pathway amino-acid biosynthesis; L-leucine biosynthesis; L-leucine from 3-methyl-2-oxobutanoate: step 2/4. Catalyzes the isomerization between 2-isopropylmalate and 3-isopropylmalate, via the formation of 2-isopropylmaleate. In Heliobacterium modesticaldum (strain ATCC 51547 / Ice1), this protein is 3-isopropylmalate dehydratase small subunit.